Reading from the N-terminus, the 242-residue chain is ATP synthase subunit a (242 aa).

Helical transmembrane passes span 28-48 (LHGQVFLSSWVVIGLLLLLVV), 89-109 (LPFVGTLFLFIFVCNWGGALI), 128-148 (INTTVAMALLVSLSYFYAGLS), 193-213 (LVVAVLAFLVPVLVPLPAMFL), and 214-234 (GLFTSAIQALIFATLAANYIG).

This sequence belongs to the ATPase A chain family. In terms of assembly, F-type ATPases have 2 components, CF(1) - the catalytic core - and CF(0) - the membrane proton channel. CF(1) has five subunits: alpha(3), beta(3), gamma(1), delta(1), epsilon(1). CF(0) has four main subunits: a, b, b' and c.

Its subcellular location is the cellular thylakoid membrane. Key component of the proton channel; it plays a direct role in the translocation of protons across the membrane. The sequence is that of ATP synthase subunit a from Synechococcus sp. (strain WH7803).